Reading from the N-terminus, the 1096-residue chain is DNA-directed RNA polymerase subunit beta (1096 aa).

The segment at 1069-1096 is disordered; sequence DLMQDVNPRRSTPSRPTYESLGSDYQED.

This sequence belongs to the RNA polymerase beta chain family. As to quaternary structure, in cyanobacteria the RNAP catalytic core is composed of 2 alpha, 1 beta, 1 beta', 1 gamma and 1 omega subunit. When a sigma factor is associated with the core the holoenzyme is formed, which can initiate transcription.

The catalysed reaction is RNA(n) + a ribonucleoside 5'-triphosphate = RNA(n+1) + diphosphate. Functionally, DNA-dependent RNA polymerase catalyzes the transcription of DNA into RNA using the four ribonucleoside triphosphates as substrates. This Prochlorococcus marinus (strain SARG / CCMP1375 / SS120) protein is DNA-directed RNA polymerase subunit beta.